Reading from the N-terminus, the 203-residue chain is Glycerol-3-phosphate acyltransferase (203 aa).

Helical transmembrane passes span 3–23, 51–71, 74–94, 116–136, 140–160, and 164–178; these read ILLA…VVVS, KAAI…VWLV, FGIG…LGHL, AVHP…AFFF, SLAA…LFGT, and PVAW…LLIW.

This sequence belongs to the PlsY family. Probably interacts with PlsX.

The protein resides in the cell inner membrane. It carries out the reaction an acyl phosphate + sn-glycerol 3-phosphate = a 1-acyl-sn-glycero-3-phosphate + phosphate. It participates in lipid metabolism; phospholipid metabolism. Functionally, catalyzes the transfer of an acyl group from acyl-phosphate (acyl-PO(4)) to glycerol-3-phosphate (G3P) to form lysophosphatidic acid (LPA). This enzyme utilizes acyl-phosphate as fatty acyl donor, but not acyl-CoA or acyl-ACP. The polypeptide is Glycerol-3-phosphate acyltransferase (Burkholderia pseudomallei (strain K96243)).